An 885-amino-acid chain; its full sequence is Protein kintoun (885 aa).

6 disordered regions span residues 208 to 235, 371 to 390, 607 to 636, 644 to 663, 781 to 806, and 819 to 871; these read LSKNPTAEEKEPHPLEHMYPKKPEADAG, LSREDSGVELNSNGESPVED, ELQQLHHQKKLNKKQRKRNKKQRSLSESAC, EHHEQPMDTLKLPHRKQRSY, RRLSEGDSADYVEVDSTHGSGDQPAH, and NNNH…MMFE. The span at 213 to 232 shows a compositional bias: basic and acidic residues; sequence TAEEKEPHPLEHMYPKKPEA. S376 is subject to Phosphoserine. The segment covering 612–629 has biased composition (basic residues); it reads HHQKKLNKKQRKRNKKQR. The residue at position 784 (S784) is a Phosphoserine. Basic and acidic residues predominate over residues 824 to 837; the sequence is HVKDNKKQSLHDSG. Low complexity predominate over residues 842-855; that stretch reads NGSINNKNNHSNEN.

Belongs to the PIH1 family. Kintoun subfamily. In terms of assembly, interacts with Pp1alpha-96A, Pp1-87B, Pp1-13C and flw.

It is found in the cytoplasm. Its function is as follows. Required for cytoplasmic pre-assembly of axonemal dyneins, thereby playing a central role in motility in cilia and flagella. Involved in pre-assembly of dynein arm complexes in the cytoplasm before intraflagellar transport loads them for the ciliary compartment. This chain is Protein kintoun, found in Drosophila mojavensis (Fruit fly).